The following is a 527-amino-acid chain: (3S)-3-amino-3-(3-chloro-4-hydroxyphenyl)propanoyl-[peptidyl-carrier protein SgcC2] monooxygenase (527 aa).

Over residues 1-10 (MPHGAEREAS) the composition is skewed to basic and acidic residues. The interval 1 to 22 (MPHGAEREASPAEESAGTRPLT) is disordered. Residues 161-163 (HAF), 167-170 (PVDR), and T202 contribute to the FAD site.

This sequence belongs to the FADH(2)-utilizing monooxygenase family. In terms of assembly, homotetramer.

The catalysed reaction is (3S)-3-amino-3-(3-chloro-4-hydroxyphenyl)propanoyl-[SgcC2 peptidyl-carrier protein] + FADH2 + O2 = (3S)-3-amino-3-(3-chloro-4,5-dihydroxyphenyl)propanoyl-[SgcC2 peptidyl-carrier protein] + FAD + H2O + H(+). It participates in antibiotic biosynthesis. Its activity is regulated as follows. The SgcE6-SgcC hydroxylation activity decreases in the presence of excess FAD. Oxygenase component of a two-component system involved in the biosynthesis of the enediyne antitumor antibiotic C-1027. Uses FADH(2) supplied by SgcE6 to catalyze the C-5 hydroxylation of (S)-3-chloro-beta-tyrosyl-S-SgcC2. Can also efficiently catalyze the regioselective hydroxylation of other 3-substituted beta-tyrosyl-S-SgcC2 analogs, including the bromo-, iodo-, fluoro-, and methyl-substituted analogs, but does not accept 3-hydroxy-beta-tyrosyl-S-SgcC2 as a substrate. Is only active with SgcC2 (peptidyl carrier protein)-tethered substrates. The polypeptide is (3S)-3-amino-3-(3-chloro-4-hydroxyphenyl)propanoyl-[peptidyl-carrier protein SgcC2] monooxygenase (Streptomyces globisporus).